A 163-amino-acid chain; its full sequence is Probable chemoreceptor glutamine deamidase CheD (163 aa).

This sequence belongs to the CheD family.

The catalysed reaction is L-glutaminyl-[protein] + H2O = L-glutamyl-[protein] + NH4(+). Its function is as follows. Probably deamidates glutamine residues to glutamate on methyl-accepting chemotaxis receptors (MCPs), playing an important role in chemotaxis. The sequence is that of Probable chemoreceptor glutamine deamidase CheD from Borrelia turicatae (strain 91E135).